The sequence spans 215 residues: Redox-sensing transcriptional repressor Rex (215 aa).

The H-T-H motif DNA-binding region spans 18–57; the sequence is LYHRYLKYLDESGKERVSSAELSEAVKVDSATIRRDFSYF. Residue 92–97 participates in NAD(+) binding; sequence GVGNLG.

Belongs to the transcriptional regulatory Rex family. As to quaternary structure, homodimer.

The protein resides in the cytoplasm. In terms of biological role, modulates transcription in response to changes in cellular NADH/NAD(+) redox state. This Listeria innocua serovar 6a (strain ATCC BAA-680 / CLIP 11262) protein is Redox-sensing transcriptional repressor Rex.